The chain runs to 301 residues: Aquaporin NIP2-3 (301 aa).

The next 2 helical transmembrane spans lie at 57-77 and 91-111; these read VISE…AASI and SVAG…ISGA. The NPA 1 signature appears at 114–116; it reads NPA. 3 helical membrane-spanning segments follow: residues 132 to 154, 172 to 192, and 200 to 220; these read VPFY…KAVL, ALAI…AVAT, and LAGL…GPVS. Residues 225–227 carry the NPA 2 motif; sequence NPA. A helical membrane pass occupies residues 238–258; that stretch reads VFTGLWIYFLGPVVGTLSGAW.

Belongs to the MIP/aquaporin (TC 1.A.8) family. NIP (TC 1.A.8.12) subfamily.

The protein localises to the membrane. Functionally, aquaporins facilitate the transport of water and small neutral solutes across cell membranes. The polypeptide is Aquaporin NIP2-3 (NIP2-3) (Zea mays (Maize)).